Consider the following 848-residue polypeptide: Adenylate cyclase (848 aa).

Residues 1 to 535 form a catalytic region; sequence MYLYIETLKQ…DVSHHFPLRL (535 aa). The interval 541–848 is regulatory; it reads KALYSPCEIR…DTPLLQQYFS (308 aa). H609 is modified (phosphohistidine; by CRR).

The protein belongs to the adenylyl cyclase class-1 family.

The protein localises to the cytoplasm. It carries out the reaction ATP = 3',5'-cyclic AMP + diphosphate. The regulatory domain is involved in the regulation of cyclase activity by the carbon source. Activated by the PTS system, glucose-specific IIA component (CRR). In terms of biological role, catalyzes the formation of the second messenger cAMP from ATP. Its transcript is probably degraded by endoribonuclease LS (rnlA), decreasing cAMP levels and the negative regulator Crp-cAMP, which then induces its own transcription again. This is Adenylate cyclase (cyaA) from Escherichia coli (strain K12).